Consider the following 594-residue polypeptide: Putative lipase ATG15-1 (594 aa).

The Cytoplasmic portion of the chain corresponds to 1–12 (MRRRPLCTSASR). A helical; Signal-anchor for type II membrane protein membrane pass occupies residues 13–33 (VTASLLLSFLAVSSAAELPIL). The Lumenal segment spans residues 34-594 (PAPPISPQPH…ANHFVYVLHA (561 aa)). N144, N179, N201, N259, and N283 each carry an N-linked (GlcNAc...) asparagine glycan. The active-site Charge relay system is the S299. Residues N432 and N445 are each glycosylated (N-linked (GlcNAc...) asparagine). The segment covering 447–469 (TETTTTSTSKPTSTSKSSKSNTR) has biased composition (low complexity). 2 disordered regions span residues 447–473 (TETTTTSTSKPTSTSKSSKSNTRTRTE) and 489–509 (TGTQTSTSTPKHTSTSSTSTC). 2 N-linked (GlcNAc...) asparagine glycosylation sites follow: N576 and N582.

Belongs to the AB hydrolase superfamily. Lipase family. As to quaternary structure, binds to both phosphatidylinositol (PI) and phosphatidylinositol 3,5-bisphosphate (PIP2).

Its subcellular location is the endosome. It localises to the multivesicular body membrane. The protein localises to the prevacuolar compartment membrane. The catalysed reaction is a triacylglycerol + H2O = a diacylglycerol + a fatty acid + H(+). Functionally, lipase which is essential for lysis of subvacuolar cytoplasm to vacuole targeted bodies and intravacuolar autophagic bodies. Involved in the lysis of intravacuolar multivesicular body (MVB) vesicles. The intravacuolar membrane disintegration by ATG15 is critical to life span extension. The chain is Putative lipase ATG15-1 (ATG15-1) from Phaeosphaeria nodorum (strain SN15 / ATCC MYA-4574 / FGSC 10173) (Glume blotch fungus).